The chain runs to 101 residues: Small ribosomal subunit protein uS14 (101 aa).

Belongs to the universal ribosomal protein uS14 family. Part of the 30S ribosomal subunit. Contacts proteins S3 and S10.

Its function is as follows. Binds 16S rRNA, required for the assembly of 30S particles and may also be responsible for determining the conformation of the 16S rRNA at the A site. The polypeptide is Small ribosomal subunit protein uS14 (Psychrobacter arcticus (strain DSM 17307 / VKM B-2377 / 273-4)).